A 388-amino-acid polypeptide reads, in one-letter code: Chorismate synthase (388 aa).

Residues Arg39 and Arg45 each contribute to the NADP(+) site. FMN contacts are provided by residues 130-132 (RSS), 251-252 (NA), Ala296, 311-315 (KPIPT), and Arg337.

Belongs to the chorismate synthase family. Homotetramer. FMNH2 is required as a cofactor.

It carries out the reaction 5-O-(1-carboxyvinyl)-3-phosphoshikimate = chorismate + phosphate. Its pathway is metabolic intermediate biosynthesis; chorismate biosynthesis; chorismate from D-erythrose 4-phosphate and phosphoenolpyruvate: step 7/7. In terms of biological role, catalyzes the anti-1,4-elimination of the C-3 phosphate and the C-6 proR hydrogen from 5-enolpyruvylshikimate-3-phosphate (EPSP) to yield chorismate, which is the branch point compound that serves as the starting substrate for the three terminal pathways of aromatic amino acid biosynthesis. This reaction introduces a second double bond into the aromatic ring system. This chain is Chorismate synthase, found in Streptococcus equi subsp. zooepidemicus (strain MGCS10565).